A 1001-amino-acid chain; its full sequence is RNA-binding protein 12B (1001 aa).

Serine 98, serine 101, and serine 112 each carry phosphoserine. A Glycyl lysine isopeptide (Lys-Gly) (interchain with G-Cter in SUMO2) cross-link involves residue lysine 114. Residues 119–128 (NSGYGSSINQ) are compositionally biased toward polar residues. Positions 119-147 (NSGYGSSINQDAGFHTNGTGHGNLRPRKT) are disordered. Lysine 151 is covalently cross-linked (Glycyl lysine isopeptide (Lys-Gly) (interchain with G-Cter in SUMO2)). The RRM 1 domain maps to 155 to 230 (PYLFLRGLPY…RFIEVMQGSE (76 aa)). Basic and acidic residues predominate over residues 247–262 (LRRSEEHSPPRGINDR). A disordered region spans residues 247-278 (LRRSEEHSPPRGINDRHFRKRSHSKSPRRTRS). Phosphoserine is present on residues serine 250 and serine 254. Residues 263–278 (HFRKRSHSKSPRRTRS) are compositionally biased toward basic residues. Threonine 276 is subject to Phosphothreonine. A phosphoserine mark is found at serine 278, serine 280, serine 292, and serine 294. The RRM 2 domain occupies 284-360 (FYVHLKNLSL…RPVHIDPISR (77 aa)). At lysine 319 the chain carries N6-acetyllysine. Lysine 335 participates in a covalent cross-link: Glycyl lysine isopeptide (Lys-Gly) (interchain with G-Cter in SUMO2). At serine 377 the chain carries Phosphoserine. The 78-residue stretch at 400-477 (LCIYIRNFPF…TEVLLRLISE (78 aa)) folds into the RRM 3 domain. Glycyl lysine isopeptide (Lys-Gly) (interchain with G-Cter in SUMO2) cross-links involve residues lysine 514 and lysine 541. A disordered region spans residues 544-587 (QRDFRQPDRHPPEDFRHSSEDFRFPPEDFRHSPEDFRRPREEDF). 3 positions are modified to phosphoserine: serine 575, serine 591, and serine 638. The span at 631–881 (LEEDFRRSPT…FRSPPDDFRS (251 aa)) shows a compositional bias: basic and acidic residues. The interval 631 to 882 (LEEDFRRSPT…RSPPDDFRSH (252 aa)) is disordered. Residue threonine 640 is modified to Phosphothreonine. Serine 710 and serine 718 each carry phosphoserine. Lysine 895 participates in a covalent cross-link: Glycyl lysine isopeptide (Lys-Gly) (interchain with G-Cter in SUMO2). Residues 925-1001 (TPIKIMNLPF…GPRKVKLTLL (77 aa)) form the RRM 4 domain.

This is RNA-binding protein 12B (RBM12B) from Homo sapiens (Human).